Consider the following 100-residue polypeptide: Urease subunit gamma (100 aa).

It belongs to the urease gamma subunit family. Heterotrimer of UreA (gamma), UreB (beta) and UreC (alpha) subunits. Three heterotrimers associate to form the active enzyme.

The protein localises to the cytoplasm. It catalyses the reaction urea + 2 H2O + H(+) = hydrogencarbonate + 2 NH4(+). It functions in the pathway nitrogen metabolism; urea degradation; CO(2) and NH(3) from urea (urease route): step 1/1. The sequence is that of Urease subunit gamma from Haemophilus influenzae (strain 86-028NP).